The primary structure comprises 180 residues: UPF0340 protein llmg_0465 (180 aa).

It belongs to the UPF0340 family.

This is UPF0340 protein llmg_0465 from Lactococcus lactis subsp. cremoris (strain MG1363).